We begin with the raw amino-acid sequence, 430 residues long: Aspartate aminotransferase, mitochondrial (430 aa).

The transit peptide at 1-29 (MALLHSSRILSGMAAAFHPGLAAAASARA) directs the protein to the mitochondrion. A Phosphothreonine modification is found at Thr48. Lys59 is modified (N6-acetyllysine). Gly65 is a substrate binding site. Residue Lys73 is modified to N6-acetyllysine; alternate. At Lys73 the chain carries N6-succinyllysine; alternate. Residue Lys82 is modified to N6-acetyllysine. Lys90 bears the N6-acetyllysine; alternate mark. Lys90 carries the N6-succinyllysine; alternate modification. Position 96 is a 3'-nitrotyrosine; alternate (Tyr96). Phosphotyrosine; alternate is present on Tyr96. Lys107 and Lys122 each carry N6-acetyllysine; alternate. Lys107 and Lys122 each carry N6-succinyllysine; alternate. Ser143 carries the phosphoserine modification. At Lys159 the chain carries N6-acetyllysine; alternate. Lys159 carries the post-translational modification N6-succinyllysine; alternate. Residue Trp162 coordinates substrate. Lys185 is modified (N6-acetyllysine; alternate). Residue Lys185 is modified to N6-succinyllysine; alternate. Residue Asn215 participates in substrate binding. N6-succinyllysine is present on Lys227. Lys234 is modified (N6-acetyllysine). N6-acetyllysine; alternate is present on residues Lys279 and Lys296. Position 279 is an N6-(pyridoxal phosphate)lysine; alternate (Lys279). N6-succinyllysine; alternate is present on Lys296. Lys302 is subject to N6-acetyllysine. Residue Lys309 is modified to N6-acetyllysine; alternate. Lys309 is modified (N6-succinyllysine; alternate). Arg313 carries the post-translational modification Asymmetric dimethylarginine. Lys338 bears the N6-acetyllysine; alternate mark. Position 338 is an N6-succinyllysine; alternate (Lys338). Lys345 carries the post-translational modification N6-acetyllysine. Lys363 is modified (N6-acetyllysine; alternate). Lys363 is modified (N6-succinyllysine; alternate). Lys364 and Lys387 each carry N6-acetyllysine. N6-acetyllysine; alternate is present on residues Lys396 and Lys404. Lys396 and Lys404 each carry N6-succinyllysine; alternate. Arg407 serves as a coordination point for substrate.

Belongs to the class-I pyridoxal-phosphate-dependent aminotransferase family. Homodimer. The cofactor is pyridoxal 5'-phosphate. In terms of processing, acetylation of Lys-296, Lys-345 and Lys-363 is observed in liver mitochondria from fasted mice but not from fed mice. Detected in brain (at protein level).

It is found in the mitochondrion matrix. The protein resides in the cell membrane. It carries out the reaction L-aspartate + 2-oxoglutarate = oxaloacetate + L-glutamate. The enzyme catalyses L-kynurenine + 2-oxoglutarate = kynurenate + L-glutamate + H2O. In terms of biological role, catalyzes the irreversible transamination of the L-tryptophan metabolite L-kynurenine to form kynurenic acid (KA). As a member of the malate-aspartate shuttle, it has a key role in the intracellular NAD(H) redox balance. Is important for metabolite exchange between mitochondria and cytosol, and for amino acid metabolism. Facilitates cellular uptake of long-chain free fatty acids. The protein is Aspartate aminotransferase, mitochondrial (Got2) of Mus musculus (Mouse).